A 266-amino-acid chain; its full sequence is MEGVNAKKQKHFVLVHGAGHGAWCWYKLKPLLESSGHKVTAIDLLASGINTKRLDEVDTLRDYSLPLLELMAAIPPDEKVILVGHSFGGFSTAIAMEHYPEKISIAVFIASVMPDAVHPPSYFFNLVFEWSPKDEDPLDTKIEPYGNPDQPRTAIRYGPKYLSSKIYQNCTTEEIELANLLLRPIYLFAEDLSKAKAFSAKGYGSVKRAYIVCSEDKSFPVGFQHWLVENVGVIEAKEIKDADHMAMISKPQRLRQCLQEIADKVV.

The AB hydrolase-1 domain occupies 11–121; the sequence is HFVLVHGAGH…VMPDAVHPPS (111 aa). Catalysis depends on residues S86, D216, and H244.

This sequence belongs to the AB hydrolase superfamily. Homodimer. Mainly expressed in roots.

It carries out the reaction 17-dehydropreakuammicine + H2O = norfluorocurarine + methanol + CO2. Its pathway is alkaloid biosynthesis. In terms of biological role, hydrolase involved in the biosynthesis of curare monoterpene indole alkaloids (MIAs), natural products such as strychnine, a neurotoxic compound used as a pesticide to control rodents, and its pharmacologically active derivatives, including brucine, used to regulate blood pressure. Curare alkaloids act as animal glycine receptor antagonists. Catalyzes the conversion of dehydropreakuammicine to norfluorocurarine. The polypeptide is Norfluorocurarine synthase 1 (Strychnos nux-vomica (Poison nut)).